The primary structure comprises 367 residues: D-alanine--D-alanine ligase (367 aa).

Residues 139–340 (KLILKEKNIP…FSQVIDNMIS (202 aa)) enclose the ATP-grasp domain. 169–224 (KEVLEYPMIVKPARLGSSIGVKKVNDKCELEEAIETAFSFDDKVIVEKWIDSRELN) contributes to the ATP binding site. Mg(2+)-binding residues include Asp298, Glu311, and Asn313.

This sequence belongs to the D-alanine--D-alanine ligase family. Requires Mg(2+) as cofactor. Mn(2+) is required as a cofactor.

It is found in the cytoplasm. It catalyses the reaction 2 D-alanine + ATP = D-alanyl-D-alanine + ADP + phosphate + H(+). It participates in cell wall biogenesis; peptidoglycan biosynthesis. Functionally, cell wall formation. In Thermosipho africanus (strain TCF52B), this protein is D-alanine--D-alanine ligase.